A 236-amino-acid chain; its full sequence is Geranylgeranylglyceryl phosphate synthase (236 aa).

Position 13 (Lys-13) interacts with sn-glycerol 1-phosphate. Mg(2+)-binding residues include Asp-15 and Thr-42. Sn-glycerol 1-phosphate is bound by residues 161-166 (YVEYSG), Gly-191, and 211-212 (GD).

This sequence belongs to the GGGP/HepGP synthase family. Group I subfamily. Mg(2+) is required as a cofactor.

The protein resides in the cytoplasm. It catalyses the reaction sn-glycerol 1-phosphate + (2E,6E,10E)-geranylgeranyl diphosphate = sn-3-O-(geranylgeranyl)glycerol 1-phosphate + diphosphate. It participates in membrane lipid metabolism; glycerophospholipid metabolism. Prenyltransferase that catalyzes the transfer of the geranylgeranyl moiety of geranylgeranyl diphosphate (GGPP) to the C3 hydroxyl of sn-glycerol-1-phosphate (G1P). This reaction is the first ether-bond-formation step in the biosynthesis of archaeal membrane lipids. This Halobacterium salinarum (strain ATCC 700922 / JCM 11081 / NRC-1) (Halobacterium halobium) protein is Geranylgeranylglyceryl phosphate synthase.